The chain runs to 66 residues: Beta-mammal toxin Co3 (66 aa).

The LCN-type CS-alpha/beta domain maps to Lys-1–Asn-66. 4 disulfide bridges follow: Cys-12–Cys-65, Cys-16–Cys-41, Cys-25–Cys-46, and Cys-29–Cys-48.

As to expression, expressed by the venom gland.

It localises to the secreted. Beta toxins bind voltage-independently at site-4 of sodium channels (Nav) and shift the voltage of activation toward more negative potentials thereby affecting sodium channel activation and promoting spontaneous and repetitive firing. This toxin acts on human Nav1.2/SCN2A, Nav1.4/SCN4A and Nav1.6/SCN8A voltage-gated sodium channels. Also, it reduces the peak of sodium currents in Nav1.5/SCN5A at all potentials. In vivo, is lethal to mice when intraperitoneally injected at a dose of 5ug. No activity is observed when injected into crickets or woodlice. The protein is Beta-mammal toxin Co3 of Centruroides ornatus (Scorpion).